The chain runs to 181 residues: Adenine phosphoribosyltransferase (181 aa).

The protein belongs to the purine/pyrimidine phosphoribosyltransferase family. Homodimer.

Its subcellular location is the cytoplasm. The enzyme catalyses AMP + diphosphate = 5-phospho-alpha-D-ribose 1-diphosphate + adenine. It functions in the pathway purine metabolism; AMP biosynthesis via salvage pathway; AMP from adenine: step 1/1. Functionally, catalyzes a salvage reaction resulting in the formation of AMP, that is energically less costly than de novo synthesis. The protein is Adenine phosphoribosyltransferase of Methylobacterium nodulans (strain LMG 21967 / CNCM I-2342 / ORS 2060).